Here is a 463-residue protein sequence, read N- to C-terminus: Glycine--tRNA ligase (463 aa).

Positions 98 and 174 each coordinate substrate. ATP-binding positions include 206-208 (RNE), 216-221 (FRTREF), 290-291 (EL), and 334-337 (GADR). Residue 221 to 225 (FEQME) participates in substrate binding. A substrate-binding site is contributed by 330-334 (EPSLG).

This sequence belongs to the class-II aminoacyl-tRNA synthetase family. Homodimer.

Its subcellular location is the cytoplasm. It carries out the reaction tRNA(Gly) + glycine + ATP = glycyl-tRNA(Gly) + AMP + diphosphate. In terms of biological role, catalyzes the attachment of glycine to tRNA(Gly). The chain is Glycine--tRNA ligase from Staphylococcus epidermidis (strain ATCC 35984 / DSM 28319 / BCRC 17069 / CCUG 31568 / BM 3577 / RP62A).